The primary structure comprises 140 residues: 3-hydroxyacyl-[acyl-carrier-protein] dehydratase FabZ (140 aa).

Residue histidine 47 is part of the active site.

It belongs to the thioester dehydratase family. FabZ subfamily.

It is found in the cytoplasm. It catalyses the reaction a (3R)-hydroxyacyl-[ACP] = a (2E)-enoyl-[ACP] + H2O. Functionally, involved in unsaturated fatty acids biosynthesis. Catalyzes the dehydration of short chain beta-hydroxyacyl-ACPs and long chain saturated and unsaturated beta-hydroxyacyl-ACPs. In Streptococcus pneumoniae serotype 2 (strain D39 / NCTC 7466), this protein is 3-hydroxyacyl-[acyl-carrier-protein] dehydratase FabZ.